We begin with the raw amino-acid sequence, 437 residues long: Doublesex- and mab-3-related transcription factor A2 (437 aa).

The segment at residues Cys49 to Arg96 is a DNA-binding region (DM). The disordered stretch occupies residues Ile160–Gln253. 2 stretches are compositionally biased toward low complexity: residues Ser179–Glu201 and Ser223–Gly235. One can recognise a DMA domain in the interval Arg254–Gln289.

The protein belongs to the DMRT family.

It is found in the nucleus. Functionally, may be involved in sexual development. The chain is Doublesex- and mab-3-related transcription factor A2 (dmrta2) from Xenopus laevis (African clawed frog).